The following is a 386-amino-acid chain: Acetylornithine aminotransferase (386 aa).

Pyridoxal 5'-phosphate is bound by residues glycine 94–threonine 95 and phenylalanine 121. N(2)-acetyl-L-ornithine is bound at residue arginine 124. Aspartate 206–glutamine 209 is a binding site for pyridoxal 5'-phosphate. Lysine 235 bears the N6-(pyridoxal phosphate)lysine mark. Position 263 (serine 263) interacts with N(2)-acetyl-L-ornithine. Threonine 264 contacts pyridoxal 5'-phosphate.

It belongs to the class-III pyridoxal-phosphate-dependent aminotransferase family. ArgD subfamily. As to quaternary structure, homodimer. Pyridoxal 5'-phosphate serves as cofactor.

It is found in the cytoplasm. The catalysed reaction is N(2)-acetyl-L-ornithine + 2-oxoglutarate = N-acetyl-L-glutamate 5-semialdehyde + L-glutamate. Its pathway is amino-acid biosynthesis; L-arginine biosynthesis; N(2)-acetyl-L-ornithine from L-glutamate: step 4/4. This chain is Acetylornithine aminotransferase, found in Listeria monocytogenes serotype 4b (strain F2365).